Here is a 189-residue protein sequence, read N- to C-terminus: Pyridoxal 5'-phosphate synthase subunit PdxT (189 aa).

Residue 46–48 coordinates L-glutamine; it reads GES. Cys-78 acts as the Nucleophile in catalysis. L-glutamine-binding positions include Arg-107 and 136–137; that span reads IR. Active-site charge relay system residues include His-173 and Glu-175.

It belongs to the glutaminase PdxT/SNO family. In the presence of PdxS, forms a dodecamer of heterodimers. Only shows activity in the heterodimer.

The enzyme catalyses aldehydo-D-ribose 5-phosphate + D-glyceraldehyde 3-phosphate + L-glutamine = pyridoxal 5'-phosphate + L-glutamate + phosphate + 3 H2O + H(+). The catalysed reaction is L-glutamine + H2O = L-glutamate + NH4(+). The protein operates within cofactor biosynthesis; pyridoxal 5'-phosphate biosynthesis. Catalyzes the hydrolysis of glutamine to glutamate and ammonia as part of the biosynthesis of pyridoxal 5'-phosphate. The resulting ammonia molecule is channeled to the active site of PdxS. This is Pyridoxal 5'-phosphate synthase subunit PdxT from Roseiflexus sp. (strain RS-1).